A 78-amino-acid polypeptide reads, in one-letter code: UPF0235 protein AF_2072 (78 aa).

Belongs to the UPF0235 family.

The chain is UPF0235 protein AF_2072 from Archaeoglobus fulgidus (strain ATCC 49558 / DSM 4304 / JCM 9628 / NBRC 100126 / VC-16).